The sequence spans 288 residues: Cytochrome b-c1 complex catalytic subunit, mitochondrial (288 aa).

Residues 12–34 traverse the membrane as a helical segment; sequence SMVQKFIAGGVGVTGLTASYLLY. The region spanning 69 to 222 is the Cytochrome c domain; it reads ASIRRGFQVY…DLVEYEDGTP (154 aa). Residues C82, C85, and H86 each contribute to the heme c site. Residues 111–121 are compositionally biased toward acidic residues; the sequence is EELEYDDEPDD. The segment at 111 to 138 is disordered; that stretch reads EELEYDDEPDDEGKPRKRPGKLADYIPG. A helical membrane pass occupies residues 250 to 268; sequence WGLKALVVLSSLYLLSIWV.

It belongs to the cytochrome c family. In terms of assembly, component of the ubiquinol-cytochrome c oxidoreductase (cytochrome b-c1 complex, complex III, CIII), a multisubunit enzyme composed of 10 subunits. The complex is composed of 3 respiratory subunits cytochrome b (COB), cytochrome c1 (CYT1) and Rieske protein (RIP1), 2 core protein subunits COR1 and QCR2, and 5 low-molecular weight protein subunits QCR6, QCR7, QCR8, QCR9 and QCR10. The complex exists as an obligatory dimer and forms supercomplexes (SCs) in the inner mitochondrial membrane with a monomer or a dimer of cytochrome c oxidase (complex IV, CIV), resulting in 2 different assemblies (supercomplexes III(2)IV and III(2)IV(2)). It depends on heme c as a cofactor.

It is found in the mitochondrion inner membrane. The catalysed reaction is a quinol + 2 Fe(III)-[cytochrome c](out) = a quinone + 2 Fe(II)-[cytochrome c](out) + 2 H(+)(out). In terms of biological role, component of the ubiquinol-cytochrome c oxidoreductase, a multisubunit transmembrane complex that is part of the mitochondrial electron transport chain which drives oxidative phosphorylation. The complex plays an important role in the uptake of multiple carbon sources present in different host niches. In Candida albicans (strain SC5314 / ATCC MYA-2876) (Yeast), this protein is Cytochrome b-c1 complex catalytic subunit, mitochondrial.